The primary structure comprises 105 residues: Gastrin/cholecystokinin-like peptide (105 aa).

The N-terminal stretch at 1-20 (MKTKVFLGLILSAAVTACLC) is a signal peptide. A propeptide spanning residues 21-38 (RPAAKAPGGSHRPTSSLA) is cleaved from the precursor. The interval 24-51 (AKAPGGSHRPTSSLARRDWPEPPSQEQQ) is disordered. Y87 carries the sulfotyrosine modification. Position 93 is a phenylalanine amide (F93). A propeptide spanning residues 97–105 (STEDAADAA) is cleaved from the precursor.

Belongs to the gastrin/cholecystokinin family.

The protein resides in the secreted. Potent stimulus of gastric acid, but not of pancreatic secretion. This chain is Gastrin/cholecystokinin-like peptide, found in Gallus gallus (Chicken).